We begin with the raw amino-acid sequence, 255 residues long: 3-deoxy-manno-octulosonate cytidylyltransferase (255 aa).

It belongs to the KdsB family.

Its subcellular location is the cytoplasm. The enzyme catalyses 3-deoxy-alpha-D-manno-oct-2-ulosonate + CTP = CMP-3-deoxy-beta-D-manno-octulosonate + diphosphate. The protein operates within nucleotide-sugar biosynthesis; CMP-3-deoxy-D-manno-octulosonate biosynthesis; CMP-3-deoxy-D-manno-octulosonate from 3-deoxy-D-manno-octulosonate and CTP: step 1/1. It participates in bacterial outer membrane biogenesis; lipopolysaccharide biosynthesis. In terms of biological role, activates KDO (a required 8-carbon sugar) for incorporation into bacterial lipopolysaccharide in Gram-negative bacteria. This is 3-deoxy-manno-octulosonate cytidylyltransferase from Polaromonas sp. (strain JS666 / ATCC BAA-500).